We begin with the raw amino-acid sequence, 66 residues long: MANPKRKWSKARTGKRRSQWKLTVPNLVECPHCHSLKLLHRVCKECGHYTVRHKGERKSIEVLSVE.

It belongs to the bacterial ribosomal protein bL32 family.

The sequence is that of Large ribosomal subunit protein bL32 from Acetivibrio thermocellus (strain ATCC 27405 / DSM 1237 / JCM 9322 / NBRC 103400 / NCIMB 10682 / NRRL B-4536 / VPI 7372) (Clostridium thermocellum).